We begin with the raw amino-acid sequence, 166 residues long: Small ribosomal subunit protein uS5 (166 aa).

One can recognise an S5 DRBM domain in the interval 11–74 (LREKLVAINR…EKARANMKRV (64 aa)).

It belongs to the universal ribosomal protein uS5 family. As to quaternary structure, part of the 30S ribosomal subunit. Contacts proteins S4 and S8.

Its function is as follows. With S4 and S12 plays an important role in translational accuracy. Located at the back of the 30S subunit body where it stabilizes the conformation of the head with respect to the body. This is Small ribosomal subunit protein uS5 from Alkalilimnicola ehrlichii (strain ATCC BAA-1101 / DSM 17681 / MLHE-1).